A 732-amino-acid polypeptide reads, in one-letter code: Adducin-related protein 1 (732 aa).

Disordered regions lie at residues 1 to 22 (MIGR…DPEY) and 684 to 732 (TRFS…KKDK). Residues 685-705 (RFSSTQGTSEGNTTSRSCTTA) are compositionally biased toward polar residues. Residues 716-732 (KKKKKKGFLSFMRKKDK) show a composition bias toward basic residues.

It belongs to the aldolase class II family. Adducin subfamily.

Its subcellular location is the cytoplasm. It is found in the cytoskeleton. It localises to the cell membrane. Functionally, membrane-cytoskeleton-associated protein that promotes the assembly of the spectrin-actin network. Plays a role in time-dependent memmory loss and the retention of conditioned behavior over time. The chain is Adducin-related protein 1 from Caenorhabditis elegans.